A 647-amino-acid chain; its full sequence is DNA polymerase subunit gamma-1 (647 aa).

The interval 116-147 (ERPGRAEQSQMQDEDGLPELVEESSQPSFHHG) is disordered. Residues 127–137 (QDEDGLPELVE) show a composition bias toward acidic residues.

The protein belongs to the DNA polymerase type-A family. As to quaternary structure, heterotrimer composed of a catalytic subunit and a homodimer of accessory subunits. Interacts with TTC3. Requires Mg(2+) as cofactor.

It localises to the mitochondrion. It is found in the mitochondrion matrix. Its subcellular location is the mitochondrion nucleoid. The enzyme catalyses DNA(n) + a 2'-deoxyribonucleoside 5'-triphosphate = DNA(n+1) + diphosphate. Its function is as follows. Involved in the replication of mitochondrial DNA. Associates with mitochondrial DNA. This is DNA polymerase subunit gamma-1 (POLG) from Gallus gallus (Chicken).